The chain runs to 120 residues: Large ribosomal subunit protein uL18 (120 aa).

This sequence belongs to the universal ribosomal protein uL18 family. As to quaternary structure, part of the 50S ribosomal subunit; part of the 5S rRNA/L5/L18/L25 subcomplex. Contacts the 5S and 23S rRNAs.

Its function is as follows. This is one of the proteins that bind and probably mediate the attachment of the 5S RNA into the large ribosomal subunit, where it forms part of the central protuberance. This is Large ribosomal subunit protein uL18 from Trichodesmium erythraeum (strain IMS101).